Reading from the N-terminus, the 320-residue chain is Aminoacyl tRNA synthase complex-interacting multifunctional protein 2 (320 aa).

Residue Ser-36 is modified to Phosphoserine. Residues 82 to 162 form an interaction with PRKN region; it reads TPDADLDVTN…HTHSSVKNVP (81 aa). The interval 162–225 is interaction with TP53; sequence PENLVKCFGE…FLFSLFGQKH (64 aa). Residues 220–317 enclose the GST C-terminal domain; that stretch reads LFGQKHNAVT…NLAPFSTALQ (98 aa).

In terms of assembly, part of the multisynthetase complex (MSC), a multisubunit complex that groups tRNA ligases for Arg (RARS1), Asp (DARS1), Gln (QARS1), Ile (IARS1), Leu (LARS1), Lys (KARS1), Met (MARS1) the bifunctional ligase for Glu and Pro (EPRS1) and the auxiliary subunits AIMP1/p43, AIMP2/p38 and EEF1E1/p18. Interacts (via N-terminus) with KARS1. Interacts with EPRS1. Forms a linear complex that contains MARS1, EEF1E1, EPRS1 and AIMP2 that is at the core of the multisubunit complex. Binds FUBP1 (via C-terminus). Interacts in both its unphosphorylated and phosphorylated forms with p53/TP53 (via N-terminus) in the nucleus following UV irradiation. Interacts (via N-terminus) with PRKN/parkin (via first RING-type domain). Interacts with TARS3. Phosphorylated on serine residues in response to UV irradiation. In terms of processing, ubiquitinated by PRKN, leading to its degradation by the proteasome.

The protein resides in the cytoplasm. It is found in the cytosol. The protein localises to the nucleus. Its function is as follows. Required for assembly and stability of the aminoacyl-tRNA synthase complex. Mediates ubiquitination and degradation of FUBP1, a transcriptional activator of MYC, leading to MYC down-regulation which is required for aveolar type II cell differentiation. Blocks MDM2-mediated ubiquitination and degradation of p53/TP53. Functions as a proapoptotic factor. This Mus musculus (Mouse) protein is Aminoacyl tRNA synthase complex-interacting multifunctional protein 2 (Aimp2).